The sequence spans 591 residues: Probable acetolactate synthase large subunit (591 aa).

Residue E47 participates in thiamine diphosphate binding. FAD is bound by residues R149, 258–279 (HGTK…IGCR), and 301–320 (DIDP…IVGD). Positions 396–476 (QNQMWMAHFF…VVICIFDNRT (81 aa)) are thiamine pyrophosphate binding. Residues D447 and N474 each coordinate Mg(2+).

The protein belongs to the TPP enzyme family. As to quaternary structure, dimer of large and small chains. Mg(2+) is required as a cofactor. Requires thiamine diphosphate as cofactor.

It catalyses the reaction 2 pyruvate + H(+) = (2S)-2-acetolactate + CO2. The protein operates within amino-acid biosynthesis; L-isoleucine biosynthesis; L-isoleucine from 2-oxobutanoate: step 1/4. It participates in amino-acid biosynthesis; L-valine biosynthesis; L-valine from pyruvate: step 1/4. This Methanocaldococcus jannaschii (strain ATCC 43067 / DSM 2661 / JAL-1 / JCM 10045 / NBRC 100440) (Methanococcus jannaschii) protein is Probable acetolactate synthase large subunit (ilvB).